Reading from the N-terminus, the 740-residue chain is Catalase-peroxidase (740 aa).

The signal sequence occupies residues 1–27; it reads MFKSTLPIAAAISVALTSMVLPAKALA. The segment at residues 106 to 228 is a cross-link (tryptophyl-tyrosyl-methioninium (Trp-Tyr) (with M-254)); the sequence is WHSAGVYRVH…LAAVEMGLIY (123 aa). The active-site Proton acceptor is the histidine 107. A cross-link (tryptophyl-tyrosyl-methioninium (Tyr-Met) (with W-106)) is located at residues 228–254; that stretch reads YVNPEGPHGKPDPLLAANDIRMSFGRM. Histidine 269 is a heme b binding site.

This sequence belongs to the peroxidase family. Peroxidase/catalase subfamily. Homodimer or homotetramer. Requires heme b as cofactor. In terms of processing, formation of the three residue Trp-Tyr-Met cross-link is important for the catalase, but not the peroxidase activity of the enzyme.

The catalysed reaction is H2O2 + AH2 = A + 2 H2O. It carries out the reaction 2 H2O2 = O2 + 2 H2O. Bifunctional enzyme with both catalase and broad-spectrum peroxidase activity. The polypeptide is Catalase-peroxidase (Colwellia psychrerythraea (strain 34H / ATCC BAA-681) (Vibrio psychroerythus)).